Here is a 444-residue protein sequence, read N- to C-terminus: MRNIIYFILSLLFSVTSYALETINIEHGRADPTPIAVNKFYADNSAADVLGHDMVKVISNDLKLSGLFRPISAASFIEEKTGIEYKPLFAAWRQINASLLVNGEVKKLESGKFQISFILWDTLLEKQLVGEILEVPKNLWRRAAHKIADKIYEKITGDAGYFDTKIVYVSESSSLPKIKRIALMDYDGANNKYLTNGKSLVLTPRFARSADKIFYVSYATKRRVLVYEKDLKTGKESVVGDFPGISFAPRFSPDGRKAVMSIAKNGSTHIYEIDLATKRLHKLTDGFGINTSPSYSPDGTKIVYNSDRNGVPQLYIMNSDGSDVQRISFGGGSYAAPSWSPRGDYIAFTKITKGDGGKTFNIGIMKACPQDNKNSERIITSGYLVESPCWSPNGRVIMFAKGWPSSAKAPGKNKIFAIDLTGHNEREIMTPADASDPEWSGVLN.

The first 19 residues, 1–19 (MRNIIYFILSLLFSVTSYA), serve as a signal peptide directing secretion.

The protein belongs to the TolB family. As to quaternary structure, the Tol-Pal system is composed of five core proteins: the inner membrane proteins TolA, TolQ and TolR, the periplasmic protein TolB and the outer membrane protein Pal. They form a network linking the inner and outer membranes and the peptidoglycan layer.

The protein localises to the periplasm. In terms of biological role, part of the Tol-Pal system, which plays a role in outer membrane invagination during cell division and is important for maintaining outer membrane integrity. The sequence is that of Tol-Pal system protein TolB from Rickettsia rickettsii (strain Iowa).